Consider the following 350-residue polypeptide: Protein-glutamate methylesterase/protein-glutamine glutaminase (350 aa).

A Response regulatory domain is found at 5 to 122; sequence TVLCVDDSAL…REGMLAYSEL (118 aa). Position 56 is a 4-aspartylphosphate (Asp56). Positions 153–345 constitute a CheB-type methylesterase domain; it reads LLSSEKLIAV…KRMLAKISSG (193 aa). Catalysis depends on residues Ser165, His191, and Asp287.

This sequence belongs to the CheB family. In terms of processing, phosphorylated by CheA. Phosphorylation of the N-terminal regulatory domain activates the methylesterase activity.

It is found in the cytoplasm. The enzyme catalyses [protein]-L-glutamate 5-O-methyl ester + H2O = L-glutamyl-[protein] + methanol + H(+). The catalysed reaction is L-glutaminyl-[protein] + H2O = L-glutamyl-[protein] + NH4(+). Involved in chemotaxis. Part of a chemotaxis signal transduction system that modulates chemotaxis in response to various stimuli. Catalyzes the demethylation of specific methylglutamate residues introduced into the chemoreceptors (methyl-accepting chemotaxis proteins or MCP) by CheR. Also mediates the irreversible deamidation of specific glutamine residues to glutamic acid. This Photorhabdus laumondii subsp. laumondii (strain DSM 15139 / CIP 105565 / TT01) (Photorhabdus luminescens subsp. laumondii) protein is Protein-glutamate methylesterase/protein-glutamine glutaminase.